The primary structure comprises 115 residues: Ribonuclease P protein component (115 aa).

Belongs to the RnpA family. Consists of a catalytic RNA component (M1 or rnpB) and a protein subunit.

It catalyses the reaction Endonucleolytic cleavage of RNA, removing 5'-extranucleotides from tRNA precursor.. RNaseP catalyzes the removal of the 5'-leader sequence from pre-tRNA to produce the mature 5'-terminus. It can also cleave other RNA substrates such as 4.5S RNA. The protein component plays an auxiliary but essential role in vivo by binding to the 5'-leader sequence and broadening the substrate specificity of the ribozyme. The sequence is that of Ribonuclease P protein component from Phytoplasma australiense.